A 797-amino-acid chain; its full sequence is METAKDGEQSPSEASPSAQAGPENIPEPMSREEESQPLYHEETIDLGGDEFASEENEPTSEGSHNFGDKLNEHMMESVLISDSPNNSEGDVGDLGCLQDVGEPPRGATDHRLPSSTDKEVVDTLSNGSETDGDDTPRDISDMTPDSRASLKEDSTQEDVTSMPALENAATEEVGPKDSLAPREEQTSEVSSNQSSSKDEPLPVCTIFSQATATPSQPHLFLQDGFESQMVKSPSFSSTSETSAKTPPPMVQPSPSLSTFFGDTMSSNSLASDFFDSFTTSTFISVSNPNAGSPVPEKLSSLTAPVGEKSPDSTSPSYSTRMDRSESGVSRAPLDVPESPKPFSQIQAVFAGSDDPFATALSMSEMDRRNDAWLPSQATREVLMSVATQQYGTVFIDKENLTMPGLKFDNIQGDAVKDLMLRFLGEKAAAKRQVLNASSVEQSFVGLKQLISCRNWRAAVDLCGRLLTAHGQGYGKNGLPTSHTTDSLQLWFVRLALLVKLGLFQNAEMEFEPFGNLDQPDLYYEYYPHVYPGRRGSMVPFSMRILHAELQQYLGNPQESLDRLHRVKTVCSKILANLEQGLAEDGGLSSVTQESRQASVQLWRSRLGRVLYSMANCLLLMKDYVLAVDAYLTVIKYYPEQEPQLLSGIGRILLQIGDIKTAEKYFQDVEKVTQKLDGLQGKIMVLMNRAFLYLGQNNFAEAHKFFTEILRMDPTNAVANNNAAVCLLYLGKLKDSLRQLEAMVQQDPRHYLHESVLFNLTTMYELESSRSMQKKQSLLEAVASKEGDSFNTQCLKLA.

2 disordered regions span residues 1–257 (META…PSLS) and 286–338 (SNPN…VPES). Residues 9–23 (QSPSEASPSAQAGPE) are compositionally biased toward low complexity. Residues 29-43 (MSREEESQPLYHEET) are compositionally biased toward basic and acidic residues. Acidic residues predominate over residues 47–58 (GGDEFASEENEP). Composition is skewed to basic and acidic residues over residues 66-75 (FGDKLNEHMM) and 107-121 (ATDHRLPSSTDKEVV). Phosphoserine is present on residues serine 125 and serine 128. Threonine 130 is subject to Phosphothreonine. Residues 173–185 (VGPKDSLAPREEQ) show a composition bias toward basic and acidic residues. Over residues 206-216 (IFSQATATPSQ) the composition is skewed to polar residues. Positions 232–244 (SPSFSSTSETSAK) are enriched in low complexity. Serine 234, serine 309, and serine 314 each carry phosphoserine. TPR repeat units follow at residues 607–640 (GRVLYSMANCLLLMKDYVLAVDAYLTVIKYYPEQ), 642–675 (PQLLSGIGRILLQIGDIKTAEKYFQDVEKVTQKL), 682–715 (IMVLMNRAFLYLGQNNFAEAHKFFTEILRMDPTN), and 716–749 (AVANNNAAVCLLYLGKLKDSLRQLEAMVQQDPRH).

Component of the multisubunit TRAPP (transport protein particle) complex, which includes at least TRAPPC2, TRAPPC2L, TRAPPC3, TRAPPC3L, TRAPPC4, TRAPPC5, TRAPPC8, TRAPPC9, TRAPPC10, TRAPPC11 and TRAPPC12. Interacts with CENPE. Post-translationally, phosphorylated as the cells enter mitosis but is dephosphorylated at or before the onset of anaphase. The phosphorylated form recruits CENPE to kinetochores more efficiently than the non-phosphorylated form.

Its subcellular location is the endoplasmic reticulum-Golgi intermediate compartment. The protein localises to the nucleus. Its function is as follows. Component of the TRAPP complex, which is involved in endoplasmic reticulum to Golgi apparatus trafficking at a very early stage. Also plays a role in chromosome congression, kinetochore assembly and stability and controls the recruitment of CENPE to the kinetochores. The chain is Trafficking protein particle complex subunit 12 from Mus musculus (Mouse).